A 160-amino-acid polypeptide reads, in one-letter code: Cytochrome b6-f complex subunit 4 (160 aa).

The next 3 membrane-spanning stretches (helical) occupy residues 36-56, 95-115, and 131-151; these read LLYVFPVCILGTFACCIGLAV, LLGVLAMARVPAGLITVPFIE, and LVFILGFFTAVWLGIGACLPI.

The protein belongs to the cytochrome b family. PetD subfamily. As to quaternary structure, the 4 large subunits of the cytochrome b6-f complex are cytochrome b6, subunit IV (17 kDa polypeptide, petD), cytochrome f and the Rieske protein, while the 4 small subunits are petG, petL, petM and petN. The complex functions as a dimer.

Its subcellular location is the plastid. It is found in the chloroplast thylakoid membrane. Its function is as follows. Component of the cytochrome b6-f complex, which mediates electron transfer between photosystem II (PSII) and photosystem I (PSI), cyclic electron flow around PSI, and state transitions. In Trieres chinensis (Marine centric diatom), this protein is Cytochrome b6-f complex subunit 4.